A 197-amino-acid polypeptide reads, in one-letter code: Carbohydrate-binding domain-containing protein C2E1P3.05c (197 aa).

Residues 1–23 form the signal peptide; that stretch reads MLTQSLFLTVLTLALSLVSKTSA. CBM1 domains lie at 25 to 61 and 68 to 104; these read QCSP…SQCI and PCAK…SQCI. 4 disulfide bridges follow: Cys33–Cys50, Cys44–Cys60, Cys76–Cys93, and Cys87–Cys103. The segment at 115–163 is disordered; the sequence is SSAASSTTSTTSSSSLVSSTTLTSSSPSAVSSTTSIPSISSTISSSVST. N-linked (GlcNAc...) asparagine glycosylation is found at Asn182 and Asn193.

Its subcellular location is the secreted. This chain is Carbohydrate-binding domain-containing protein C2E1P3.05c, found in Schizosaccharomyces pombe (strain 972 / ATCC 24843) (Fission yeast).